Consider the following 355-residue polypeptide: UDP-N-acetylglucosamine--N-acetylmuramyl-(pentapeptide) pyrophosphoryl-undecaprenol N-acetylglucosamine transferase (355 aa).

UDP-N-acetyl-alpha-D-glucosamine is bound by residues 12-14, asparagine 124, arginine 160, serine 192, isoleucine 243, 262-267, and glutamine 287; these read TGG and ALTVCE.

This sequence belongs to the glycosyltransferase 28 family. MurG subfamily.

It is found in the cell inner membrane. The enzyme catalyses di-trans,octa-cis-undecaprenyl diphospho-N-acetyl-alpha-D-muramoyl-L-alanyl-D-glutamyl-meso-2,6-diaminopimeloyl-D-alanyl-D-alanine + UDP-N-acetyl-alpha-D-glucosamine = di-trans,octa-cis-undecaprenyl diphospho-[N-acetyl-alpha-D-glucosaminyl-(1-&gt;4)]-N-acetyl-alpha-D-muramoyl-L-alanyl-D-glutamyl-meso-2,6-diaminopimeloyl-D-alanyl-D-alanine + UDP + H(+). It participates in cell wall biogenesis; peptidoglycan biosynthesis. Cell wall formation. Catalyzes the transfer of a GlcNAc subunit on undecaprenyl-pyrophosphoryl-MurNAc-pentapeptide (lipid intermediate I) to form undecaprenyl-pyrophosphoryl-MurNAc-(pentapeptide)GlcNAc (lipid intermediate II). This Haemophilus ducreyi (strain 35000HP / ATCC 700724) protein is UDP-N-acetylglucosamine--N-acetylmuramyl-(pentapeptide) pyrophosphoryl-undecaprenol N-acetylglucosamine transferase.